The sequence spans 198 residues: Recombination protein RecR (198 aa).

The C4-type zinc finger occupies 56–71; it reads CTECRDFSETKICAIC. A Toprim domain is found at 79-174; the sequence is HQLCVVESPP…RPSRLAQGLP (96 aa).

The protein belongs to the RecR family.

Functionally, may play a role in DNA repair. It seems to be involved in an RecBC-independent recombinational process of DNA repair. It may act with RecF and RecO. In Xylella fastidiosa (strain 9a5c), this protein is Recombination protein RecR.